We begin with the raw amino-acid sequence, 326 residues long: Chain length determinant protein (326 aa).

The Cytoplasmic portion of the chain corresponds to 1–31 (MRVENNNVSGQNHDPEQIDLIDLLVQLWRGK). The chain crosses the membrane as a helical span at residues 32–52 (MTIIISVIVAIALAIGYLAVA). The Periplasmic segment spans residues 53–295 (KEKWTSTAII…LPIRRDSPKK (243 aa)). A helical transmembrane segment spans residues 296 to 316 (AITLILAVLLGGMVGAGIVLG). The Cytoplasmic segment spans residues 317–326 (RNALRNYNAK).

Belongs to the WzzB/Cld/Rol family. Homodimer.

The protein resides in the cell inner membrane. It functions in the pathway bacterial outer membrane biogenesis; lipopolysaccharide biosynthesis. In terms of biological role, confers a modal distribution of chain length on the O-antigen component of lipopolysaccharide (LPS). Gives rise to a reduced number of short chain molecules and increases in numbers of longer molecules. The protein is Chain length determinant protein (wzzB) of Escherichia coli (strain K12).